The primary structure comprises 1079 residues: BRD4-interacting chromatin-remodeling complex-associated protein-like (1079 aa).

2 disordered regions span residues 51-79 (NSSNADPKSSLKGVSNQLGEGPSDGLPLS) and 509-604 (LHLS…TPGT). Positions 68 to 79 (LGEGPSDGLPLS) are enriched in low complexity. Residues 544–576 (SSASTAHPSLGSAVQSGSSGSNFTGDQLTQPNR) show a composition bias toward polar residues. A compositionally biased stretch (low complexity) spans 590–604 (SSSKSTSTFSNTPGT). Ser-623 bears the Phosphoserine mark. Disordered regions lie at residues 669–691 (EKVVGSSPGHPAVQVESHSGGQK), 837–877 (TQFG…NHDQ), and 917–954 (TSEEKASRREPLKASQCSPGPEGHRKTSSRSDHGTESK). 2 stretches are compositionally biased toward basic and acidic residues: residues 918–928 (SEEKASRREPL) and 938–952 (EGHRKTSSRSDHGTE). At Ser-980 the chain carries Phosphoserine.

In terms of assembly, component of the multiprotein chromatin-remodeling complexes SWI/SNF: SWI/SNF-A (BAF), SWI/SNF-B (PBAF) and related complexes. The canonical complex contains a catalytic subunit (either SMARCA4/BRG1/BAF190A or SMARCA2/BRM/BAF190B) and at least SMARCE1, ACTL6A/BAF53, SMARCC1/BAF155, SMARCC2/BAF170, and SMARCB1/SNF5/BAF47. Other subunits specific to each of the complexes may also be present permitting several possible combinations developmentally and tissue specific. Component of the SWI/SNF (GBAF) subcomplex, which includes at least BICRA or BICRAL (mutually exclusive), BRD9, SS18, the core BAF subunits, SMARCA2/BRM, SMARCA4/BRG1/BAF190A, ACTL6A/BAF53, SMARCC1/BAF155, and SMARCD1/BAF60A.

In terms of biological role, component of SWI/SNF chromatin remodeling subcomplex GBAF that carries out key enzymatic activities, changing chromatin structure by altering DNA-histone contacts within a nucleosome in an ATP-dependent manner. The protein is BRD4-interacting chromatin-remodeling complex-associated protein-like of Homo sapiens (Human).